We begin with the raw amino-acid sequence, 431 residues long: Galactose-3-O-sulfotransferase 3 (431 aa).

Over 1–19 (MPPILQRLQQSTKMMSHRK) the chain is Cytoplasmic. The helical; Signal-anchor for type II membrane protein transmembrane segment at 20 to 40 (ILLLVLGCSTVSLLIHQGSQL) threads the bilayer. Residues 41–431 (SWYPKLFPLS…RALPRIPQGT (391 aa)) lie on the Lumenal side of the membrane. Residues asparagine 91, asparagine 110, asparagine 177, and asparagine 302 are each glycosylated (N-linked (GlcNAc...) asparagine). The segment at 400–431 (KRRGGVRSRPESVLDNPPPRPIRALPRIPQGT) is disordered. Low complexity predominate over residues 421–431 (IRALPRIPQGT).

It belongs to the galactose-3-O-sulfotransferase family. It depends on Mg(2+) as a cofactor.

The protein localises to the golgi apparatus. It is found in the golgi stack membrane. The protein operates within protein modification; carbohydrate sulfation. Transfers a sulfate to position 3 of non-reducing beta-galactosyl residues in N-glycans and core2-branched O-glycans. Has high activity towards Gal-beta-1,4-GlcNAc, Gal-beta-1,4(Fuc-alpha-1,3)GlcNAc and lower activity towards Gal-beta-1,3(Fuc-alpha-1,4)GlcNAc. This chain is Galactose-3-O-sulfotransferase 3 (Gal3st3), found in Mus musculus (Mouse).